We begin with the raw amino-acid sequence, 107 residues long: Iron-sulfur cluster assembly protein CyaY (107 aa).

This sequence belongs to the frataxin family.

Its function is as follows. Involved in iron-sulfur (Fe-S) cluster assembly. May act as a regulator of Fe-S biogenesis. This Thioalkalivibrio sulfidiphilus (strain HL-EbGR7) protein is Iron-sulfur cluster assembly protein CyaY.